Here is a 440-residue protein sequence, read N- to C-terminus: Thymidine phosphorylase (440 aa).

Belongs to the thymidine/pyrimidine-nucleoside phosphorylase family. As to quaternary structure, homodimer.

It catalyses the reaction thymidine + phosphate = 2-deoxy-alpha-D-ribose 1-phosphate + thymine. It functions in the pathway pyrimidine metabolism; dTMP biosynthesis via salvage pathway; dTMP from thymine: step 1/2. In terms of biological role, the enzymes which catalyze the reversible phosphorolysis of pyrimidine nucleosides are involved in the degradation of these compounds and in their utilization as carbon and energy sources, or in the rescue of pyrimidine bases for nucleotide synthesis. This Burkholderia pseudomallei (strain K96243) protein is Thymidine phosphorylase.